A 311-amino-acid chain; its full sequence is N-acetylmuramic acid 6-phosphate etherase (311 aa).

The 164-residue stretch at 66 to 229 (VADRMARGGR…STITMIRLGK (164 aa)) folds into the SIS domain. E94 functions as the Proton donor in the catalytic mechanism. E125 is an active-site residue.

Belongs to the GCKR-like family. MurNAc-6-P etherase subfamily. As to quaternary structure, homodimer.

The catalysed reaction is N-acetyl-D-muramate 6-phosphate + H2O = N-acetyl-D-glucosamine 6-phosphate + (R)-lactate. It participates in amino-sugar metabolism; N-acetylmuramate degradation. In terms of biological role, specifically catalyzes the cleavage of the D-lactyl ether substituent of MurNAc 6-phosphate, producing GlcNAc 6-phosphate and D-lactate. This is N-acetylmuramic acid 6-phosphate etherase from Streptomyces avermitilis (strain ATCC 31267 / DSM 46492 / JCM 5070 / NBRC 14893 / NCIMB 12804 / NRRL 8165 / MA-4680).